Consider the following 315-residue polypeptide: MPKKKTGQRKKAEKQKLRLKEIRSREVPLADLPCNAPMECDKCEKKQKSRAFCYFCQSIQRLPICAQCGKIKCMLKTGDCVVKHPGVYTTGLGMVGAICDFCEAWVCHGRKCLQNHACTCPLQNATCLECERGVWEHGGRIFKCSFCNGFLCEDDQFEHQASCQVLESENYKCQSCNKLGQYSCLRCKTCYCEDHVRRKGFKYDKNKPIPCPKCNYDTSVTKDLSMSTRSHKFGRQQQGGNSDDEEGYGGYYGAGGSGYYGGAASGGYSYGGDDDEDESDGDYDDESDEDDDDDEEEDETTESEPEKETDKKATK.

The Nuclear localization signal signature appears at lysine 3–lysine 11. 4 consecutive C4-type zinc fingers follow at residues cysteine 40–cysteine 56, cysteine 65–cysteine 102, cysteine 127–cysteine 147, and cysteine 173–cysteine 187. Disordered regions lie at residues threonine 228–tyrosine 248 and alanine 263–lysine 315. A compositionally biased stretch (acidic residues) spans glycine 272–serine 303. Residues glutamate 304–lysine 315 show a composition bias toward basic and acidic residues.

This sequence belongs to the NOA36 family.

It localises to the nucleus. It is found in the nucleolus. This chain is Zinc finger protein 330 homolog (Noa36), found in Drosophila melanogaster (Fruit fly).